Consider the following 169-residue polypeptide: Large ribosomal subunit protein uL10 (169 aa).

This sequence belongs to the universal ribosomal protein uL10 family. In terms of assembly, part of the ribosomal stalk of the 50S ribosomal subunit. The N-terminus interacts with L11 and the large rRNA to form the base of the stalk. The C-terminus forms an elongated spine to which L12 dimers bind in a sequential fashion forming a multimeric L10(L12)X complex.

Forms part of the ribosomal stalk, playing a central role in the interaction of the ribosome with GTP-bound translation factors. This is Large ribosomal subunit protein uL10 from Rickettsia africae (strain ESF-5).